The primary structure comprises 324 residues: tRNA U34 carboxymethyltransferase (324 aa).

Residues lysine 91, tryptophan 105, lysine 110, glycine 130, aspartate 152–serine 154, isoleucine 181–glutamate 182, methionine 196, tyrosine 200, and arginine 315 contribute to the carboxy-S-adenosyl-L-methionine site.

This sequence belongs to the class I-like SAM-binding methyltransferase superfamily. CmoB family. Homotetramer.

It catalyses the reaction carboxy-S-adenosyl-L-methionine + 5-hydroxyuridine(34) in tRNA = 5-carboxymethoxyuridine(34) in tRNA + S-adenosyl-L-homocysteine + H(+). Its function is as follows. Catalyzes carboxymethyl transfer from carboxy-S-adenosyl-L-methionine (Cx-SAM) to 5-hydroxyuridine (ho5U) to form 5-carboxymethoxyuridine (cmo5U) at position 34 in tRNAs. The polypeptide is tRNA U34 carboxymethyltransferase (Aliivibrio salmonicida (strain LFI1238) (Vibrio salmonicida (strain LFI1238))).